The sequence spans 368 residues: MSLADQVLAVNDDLPIRTHQPVHSGKVRSVYWLTEQDSRRLIKEKGYPVAEDAPLAIMVISDRISAFDCIWHAEGGVHGVPGKGAALNAISNHWFKLFKQHGLAESHILDIPHPFVWIVQKARPIKIEAICRQYITGSMWRAYAKGEREFCGITLPEGLEKDSQLPELLMTPSTKGILRGIPGVPEADDVNISRQDIEANYAAFNFNQPQDIDHYETLLKQGFAVISEALKSVGQLFVDTKFEFGYVADQQGQQKLIYMDEVGTPDSSRIWDAQQYQQGKIVENSKEGFRQFLLNYFPDPDILLNKDRMPEREALARDNALPLEALMDISRTYLGIAEKITGQPIHLSHQPKQEIIAILDKEYGLIER.

It belongs to the SAICAR synthetase family.

It carries out the reaction 5-amino-1-(5-phospho-D-ribosyl)imidazole-4-carboxylate + L-aspartate + ATP = (2S)-2-[5-amino-1-(5-phospho-beta-D-ribosyl)imidazole-4-carboxamido]succinate + ADP + phosphate + 2 H(+). The protein operates within purine metabolism; IMP biosynthesis via de novo pathway; 5-amino-1-(5-phospho-D-ribosyl)imidazole-4-carboxamide from 5-amino-1-(5-phospho-D-ribosyl)imidazole-4-carboxylate: step 1/2. This is Phosphoribosylaminoimidazole-succinocarboxamide synthase from Vibrio cholerae serotype O1 (strain ATCC 39315 / El Tor Inaba N16961).